The following is a 76-amino-acid chain: Dermaseptin-B4 (76 aa).

Residues 1-22 (MAFLKKSLFLVLFLGLVSLSIC) form the signal peptide. Positions 23-43 (EEEKRENKDEIEQEDDEQSEE) are excised as a propeptide. Glutamine 73 is modified (glutamine amide). Residues 75–76 (EQ) constitute a propeptide that is removed on maturation.

The protein belongs to the frog skin active peptide (FSAP) family. Dermaseptin subfamily. In terms of tissue distribution, expressed by the skin glands.

The protein resides in the secreted. Potent antimicrobial peptide with potent activity against Gram-positive and Gram-negative bacteria. Probably acts by disturbing membrane functions with its amphipathic structure. Has an activity of stimulation of insulin release, which may protect the species from being eaten by predators by causing fatal hypoglycemia. Has hemolytic activity. This Phyllomedusa bicolor (Two-colored leaf frog) protein is Dermaseptin-B4.